The primary structure comprises 467 residues: 3-isopropylmalate dehydratase large subunit (467 aa).

Residues cysteine 347, cysteine 407, and cysteine 410 each contribute to the [4Fe-4S] cluster site.

The protein belongs to the aconitase/IPM isomerase family. LeuC type 1 subfamily. Heterodimer of LeuC and LeuD. [4Fe-4S] cluster is required as a cofactor.

The enzyme catalyses (2R,3S)-3-isopropylmalate = (2S)-2-isopropylmalate. The protein operates within amino-acid biosynthesis; L-leucine biosynthesis; L-leucine from 3-methyl-2-oxobutanoate: step 2/4. In terms of biological role, catalyzes the isomerization between 2-isopropylmalate and 3-isopropylmalate, via the formation of 2-isopropylmaleate. The polypeptide is 3-isopropylmalate dehydratase large subunit (Picosynechococcus sp. (strain ATCC 27264 / PCC 7002 / PR-6) (Agmenellum quadruplicatum)).